The chain runs to 212 residues: Ribosomal RNA small subunit methyltransferase G (212 aa).

Residues Gly80, Leu85, 131–132, and Arg146 contribute to the S-adenosyl-L-methionine site; that span reads AE.

This sequence belongs to the methyltransferase superfamily. RNA methyltransferase RsmG family.

It localises to the cytoplasm. The catalysed reaction is guanosine(527) in 16S rRNA + S-adenosyl-L-methionine = N(7)-methylguanosine(527) in 16S rRNA + S-adenosyl-L-homocysteine. Specifically methylates the N7 position of guanine in position 527 of 16S rRNA. The protein is Ribosomal RNA small subunit methyltransferase G of Xanthomonas euvesicatoria pv. vesicatoria (strain 85-10) (Xanthomonas campestris pv. vesicatoria).